Here is a 105-residue protein sequence, read N- to C-terminus: UPF0145 protein Ping_0381 (105 aa).

It belongs to the UPF0145 family.

The protein is UPF0145 protein Ping_0381 of Psychromonas ingrahamii (strain DSM 17664 / CCUG 51855 / 37).